Consider the following 105-residue polypeptide: Nucleoid-associated protein Sca_0120 (105 aa).

The segment at 1–36 is disordered; that stretch reads MRGGGNMQQMMKQMQKMQKKMAEEQEKLKDEKVEGS. Low complexity predominate over residues 7–16; the sequence is MQQMMKQMQK. Over residues 20–34 the composition is skewed to basic and acidic residues; the sequence is KMAEEQEKLKDEKVE.

This sequence belongs to the YbaB/EbfC family. As to quaternary structure, homodimer.

It localises to the cytoplasm. The protein localises to the nucleoid. Its function is as follows. Binds to DNA and alters its conformation. May be involved in regulation of gene expression, nucleoid organization and DNA protection. In Staphylococcus carnosus (strain TM300), this protein is Nucleoid-associated protein Sca_0120.